The chain runs to 485 residues: Glycogen synthase (485 aa).

Residue Lys-15 participates in ADP-alpha-D-glucose binding.

It belongs to the glycosyltransferase 1 family. Bacterial/plant glycogen synthase subfamily.

The enzyme catalyses [(1-&gt;4)-alpha-D-glucosyl](n) + ADP-alpha-D-glucose = [(1-&gt;4)-alpha-D-glucosyl](n+1) + ADP + H(+). It functions in the pathway glycan biosynthesis; glycogen biosynthesis. Synthesizes alpha-1,4-glucan chains using ADP-glucose. This is Glycogen synthase (glgA) from Geobacillus stearothermophilus (Bacillus stearothermophilus).